The following is a 244-amino-acid chain: 1-(5-phosphoribosyl)-5-[(5-phosphoribosylamino)methylideneamino] imidazole-4-carboxamide isomerase (244 aa).

D10 functions as the Proton acceptor in the catalytic mechanism. D132 acts as the Proton donor in catalysis.

Belongs to the HisA/HisF family.

The protein resides in the cytoplasm. It carries out the reaction 1-(5-phospho-beta-D-ribosyl)-5-[(5-phospho-beta-D-ribosylamino)methylideneamino]imidazole-4-carboxamide = 5-[(5-phospho-1-deoxy-D-ribulos-1-ylimino)methylamino]-1-(5-phospho-beta-D-ribosyl)imidazole-4-carboxamide. The protein operates within amino-acid biosynthesis; L-histidine biosynthesis; L-histidine from 5-phospho-alpha-D-ribose 1-diphosphate: step 4/9. The chain is 1-(5-phosphoribosyl)-5-[(5-phosphoribosylamino)methylideneamino] imidazole-4-carboxamide isomerase from Xanthomonas euvesicatoria pv. vesicatoria (strain 85-10) (Xanthomonas campestris pv. vesicatoria).